The primary structure comprises 822 residues: Nose resistant to fluoxetine protein 6 (822 aa).

An N-terminal signal peptide occupies residues 1 to 24 (MGNMRRLLIFAVLVILTVISNSKS). N-linked (GlcNAc...) asparagine glycosylation occurs at Asn-236. Transmembrane regions (helical) follow at residues 306–326 (LAMFALYLLIATVVLVTFGTL), 617–637 (PYIRCTPFIVGIVVAYLLNAW), and 655–675 (IICWCTSTVLGLYSVFGLYWF).

The protein belongs to the acyltransferase 3 family. In L1 larvae through to adult, hyp3 and hyp5, the most anterior cells in the hypodermis, and in intestine. Other hypodermal cells show weaker expression.

The protein resides in the membrane. Its function is as follows. Plays a role in the uptake of a range of molecules including lipids and xenobiotic compounds from the intestine to surrounding tissues. Mediates transport of lipids from intestine to the reproductive tract. Required for efficient yolk transport into oocytes. Vital for embryonic development. This chain is Nose resistant to fluoxetine protein 6 (nrf-6), found in Caenorhabditis elegans.